The chain runs to 365 residues: Peptide chain release factor 2 (365 aa).

Gln-252 is subject to N5-methylglutamine.

The protein belongs to the prokaryotic/mitochondrial release factor family. In terms of processing, methylated by PrmC. Methylation increases the termination efficiency of RF2.

The protein localises to the cytoplasm. In terms of biological role, peptide chain release factor 2 directs the termination of translation in response to the peptide chain termination codons UGA and UAA. The protein is Peptide chain release factor 2 of Klebsiella pneumoniae (strain 342).